Here is a 252-residue protein sequence, read N- to C-terminus: Phosphoglycolate phosphatase (252 aa).

Aspartate 13 serves as the catalytic Nucleophile. The Mg(2+) site is built by aspartate 13, aspartate 15, and aspartate 192.

It belongs to the HAD-like hydrolase superfamily. CbbY/CbbZ/Gph/YieH family. In terms of assembly, monomer. It depends on Mg(2+) as a cofactor. Chloride serves as cofactor.

It catalyses the reaction 2-phosphoglycolate + H2O = glycolate + phosphate. It functions in the pathway organic acid metabolism; glycolate biosynthesis; glycolate from 2-phosphoglycolate: step 1/1. In terms of biological role, specifically catalyzes the dephosphorylation of 2-phosphoglycolate. Is involved in the dissimilation of the intracellular 2-phosphoglycolate formed during the DNA repair of 3'-phosphoglycolate ends, a major class of DNA lesions induced by oxidative stress. This is Phosphoglycolate phosphatase from Escherichia coli O157:H7.